Consider the following 193-residue polypeptide: Probable nicotinate-nucleotide adenylyltransferase (193 aa).

This sequence belongs to the NadD family.

It carries out the reaction nicotinate beta-D-ribonucleotide + ATP + H(+) = deamido-NAD(+) + diphosphate. The protein operates within cofactor biosynthesis; NAD(+) biosynthesis; deamido-NAD(+) from nicotinate D-ribonucleotide: step 1/1. Catalyzes the reversible adenylation of nicotinate mononucleotide (NaMN) to nicotinic acid adenine dinucleotide (NaAD). This Flavobacterium psychrophilum (strain ATCC 49511 / DSM 21280 / CIP 103535 / JIP02/86) protein is Probable nicotinate-nucleotide adenylyltransferase.